The sequence spans 201 residues: Peptide deformylase (201 aa).

Cys-121 and His-163 together coordinate Fe cation. The active site involves Glu-164. A Fe cation-binding site is contributed by His-167.

Belongs to the polypeptide deformylase family. Requires Fe(2+) as cofactor.

It catalyses the reaction N-terminal N-formyl-L-methionyl-[peptide] + H2O = N-terminal L-methionyl-[peptide] + formate. Removes the formyl group from the N-terminal Met of newly synthesized proteins. Requires at least a dipeptide for an efficient rate of reaction. N-terminal L-methionine is a prerequisite for activity but the enzyme has broad specificity at other positions. The protein is Peptide deformylase of Parasynechococcus marenigrum (strain WH8102).